A 909-amino-acid polypeptide reads, in one-letter code: Villin-1 (909 aa).

6 Gelsolin-like repeats span residues 29–79 (KQLI…VDSI), 149–189 (VRVK…QEKA), 262–305 (GNLH…TERK), 391–448 (LKVW…QDRA), 529–569 (MQAI…SDHE), and 631–672 (LKVK…KSKE). Disordered stretches follow at residues 733–781 (SLKG…CSSE) and 816–835 (DGVA…QKPR). The span at 752–762 (QSKDNASRDLQ) shows a compositional bias: basic and acidic residues. Position 780 is a phosphoserine (S780). Positions 844 to 909 (SLESLAYSYE…NKLKISLHLF (66 aa)) constitute an HP domain.

This sequence belongs to the villin/gelsolin family. As to expression, expressed in all tissues examined. Mainly detected in the vascular tissue and the pericycle of roots and in the vasculature of leaves. Not expressed in the root cap.

It localises to the cytoplasm. Its subcellular location is the cytoskeleton. In terms of biological role, binds actin and actin filament bundles in a Ca(2+)/calmodulin-insensitive manner, but is unable to sever, cap, and nucleate actin filament formation in vitro. Does not protect individual filaments from severing by VLN3 (AC O81645). The protein is Villin-1 of Arabidopsis thaliana (Mouse-ear cress).